A 528-amino-acid chain; its full sequence is MAGYKPVAIQTYPVLGEKITQDTLYWNNYKTPVQIKEFGAVSKVDFSPQLPYNYAVTASSRIHIYGRYSQEPVKTFSRFKDTAYCATFRQDGQLLVAGSEDGVVQLFDINGRAPLRQFEGHTKAVHTVDFTADNYHVVSGADDYTVKLWDIPNSKEILTFKEHSDYVRCGCASKLNPDLFVTGSYDHTVKIFDARTNKNVLCVEHGQPVESVLLFPSGGLLVSAGGRYVKVWDMLKGGQLLVSLKNHHKTVTCLCLSSSGQRLLSGSLDRKVKVYSTTSYKVVHSFDYAASILSLALSHQDETIVVGMTNGILSVKHRKSEAKKTSLPRRRRPAYRTFIKGKNYLKQRDDIMVSRPAKKHLEGYDKDLKSFRVSQALDRVLEPKCVIRTPEVTVSIIKELTRRGVLANALAGRDEKEVTRVLNFLIRNLSQPRFAPVLINAAEIIIDIYLPVIGQSSVVDKKFIVLQELVEKEIDYQRELLETLGMMDMLFATMTRNDSDPVPEHVPAELPEEKTESPTQPSDTDKNS.

At alanine 2 the chain carries N-acetylalanine. WD repeat units lie at residues 36–75 (KEFG…PVKT), 78–117 (RFKD…PLRQ), 120–159 (GHTK…EILT), 162–202 (EHSD…NVLC), 204–242 (EHGQ…QLLV), 246–285 (NHHK…VVHS), and 287–326 (DYAA…KKTS). Lysine 249 is covalently cross-linked (Glycyl lysine isopeptide (Lys-Gly) (interchain with G-Cter in SUMO2)). The tract at residues 496-528 (RNDSDPVPEHVPAELPEEKTESPTQPSDTDKNS) is disordered. The segment covering 497–516 (NDSDPVPEHVPAELPEEKTE) has biased composition (basic and acidic residues).

Part of the small subunit (SSU) processome, composed of more than 70 proteins and the RNA chaperone small nucleolar RNA (snoRNA) U3. May be a component of the proposed t-UTP subcomplex of the ribosomal small subunit (SSU) processome containing at least UTP4, WDR43, HEATR1, UTP15, WDR75. Interacts directly with UTP4 and WDR43.

It is found in the nucleus. The protein localises to the nucleolus. In terms of biological role, ribosome biogenesis factor. Involved in nucleolar processing of pre-18S ribosomal RNA. Required for optimal pre-ribosomal RNA transcription by RNA polymerase I. Part of the small subunit (SSU) processome, first precursor of the small eukaryotic ribosomal subunit. During the assembly of the SSU processome in the nucleolus, many ribosome biogenesis factors, an RNA chaperone and ribosomal proteins associate with the nascent pre-rRNA and work in concert to generate RNA folding, modifications, rearrangements and cleavage as well as targeted degradation of pre-ribosomal RNA by the RNA exosome. The polypeptide is U3 small nucleolar RNA-associated protein 15 homolog (Utp15) (Mus musculus (Mouse)).